The chain runs to 203 residues: FMN-dependent NADH:quinone oxidoreductase (203 aa).

FMN is bound by residues Ser-9 and 15-17 (SKS).

It belongs to the azoreductase type 1 family. In terms of assembly, homodimer. It depends on FMN as a cofactor.

The catalysed reaction is 2 a quinone + NADH + H(+) = 2 a 1,4-benzosemiquinone + NAD(+). The enzyme catalyses N,N-dimethyl-1,4-phenylenediamine + anthranilate + 2 NAD(+) = 2-(4-dimethylaminophenyl)diazenylbenzoate + 2 NADH + 2 H(+). Quinone reductase that provides resistance to thiol-specific stress caused by electrophilic quinones. In terms of biological role, also exhibits azoreductase activity. Catalyzes the reductive cleavage of the azo bond in aromatic azo compounds to the corresponding amines. This chain is FMN-dependent NADH:quinone oxidoreductase, found in Bordetella avium (strain 197N).